A 328-amino-acid chain; its full sequence is MHNSATEFLKPRLVDIEQISKTHAKITLEPLERGFGHTLGNALRRILLSSMPGYAVTEVEIDGILHEYSSKEGVQEDIVEILLNLKELALIIKGKDIAVLSLFKSGIGKVTASDIIHDGNVEICHPEHVLCNLTHENSSINMRIKVQKGRGYVPAISRMHIEDRPIGRLLLDACYSPIERISYNVEAARVEQRTDLDKLIIEMETNGTIDPESAIRRAATILSEQLEAFIDLRDIRKPEIKEEKPEFDPVLLRPVDDLELTVRSANCLKAESIHYIGDLVQRTEVELLKTPNLGKKSLTEIKDVLSTRNLTLGMRIENWPPVSILKND.

Residues 1 to 233 are alpha N-terminal domain (alpha-NTD); sequence MHNSATEFLK…EQLEAFIDLR (233 aa). Residues 247-328 are alpha C-terminal domain (alpha-CTD); sequence FDPVLLRPVD…WPPVSILKND (82 aa).

This sequence belongs to the RNA polymerase alpha chain family. In terms of assembly, homodimer. The RNAP catalytic core consists of 2 alpha, 1 beta, 1 beta' and 1 omega subunit. When a sigma factor is associated with the core the holoenzyme is formed, which can initiate transcription.

The catalysed reaction is RNA(n) + a ribonucleoside 5'-triphosphate = RNA(n+1) + diphosphate. Its function is as follows. DNA-dependent RNA polymerase catalyzes the transcription of DNA into RNA using the four ribonucleoside triphosphates as substrates. This chain is DNA-directed RNA polymerase subunit alpha, found in Wigglesworthia glossinidia brevipalpis.